Here is a 103-residue protein sequence, read N- to C-terminus: MRPIHIAQLDKARPVLILTREVVRPHLTNVTVAPITTTVRGLATEVPVDAVNGLNQPSVVSCDNTQTIPVCDLGRQIGYLLASQEPALAEAIGNAFDLDWVVA.

This sequence belongs to the PemK/MazF family. In terms of assembly, forms a complex with cognate antitoxin MazE3.

Toxic component of a type II toxin-antitoxin (TA) system. Acts as an endoribonuclease, cleaving in U-rich regions. Neutralized by cognate antitoxin MazE3. This chain is Endoribonuclease MazF3 (mazF3), found in Mycobacterium tuberculosis (strain CDC 1551 / Oshkosh).